We begin with the raw amino-acid sequence, 236 residues long: Chloride intracellular channel protein 3 (236 aa).

The segment at 1–88 is required for insertion into the membrane; the sequence is MAETKLQLFV…EDFLEETLGP (88 aa). Residues 12–90 form the GST N-terminal domain; it reads ASEDGESVGH…FLEETLGPPD (79 aa). Positions 22-25 match the G-site motif; that stretch reads CPSC. Cysteine 22 and cysteine 25 are oxidised to a cystine. Residues 24-44 form a helical membrane-spanning segment; sequence SCQRLFMVLLLKGVPFTLTTV. Residues serine 49 and serine 159 each carry the phosphoserine modification. Residues 68–235 enclose the GST C-terminal domain; sequence DSDAKTDTLQ…LAAYRPAVHP (168 aa).

This sequence belongs to the chloride channel CLIC family. Associated with the C-terminal of MAPK15. In terms of tissue distribution, detected in placenta (at protein level). Widely expressed. High expression is found in placenta followed by lung and heart. Low expression in skeletal muscle, kidney and pancreas.

The protein localises to the nucleus. It localises to the membrane. The protein resides in the cell membrane. It is found in the cytoplasm. Its subcellular location is the secreted. The protein localises to the extracellular space. It localises to the extracellular matrix. The catalysed reaction is chloride(in) = chloride(out). Inhibited by rapamycin, amphotericin B and IAA-94. In the soluble state, catalyzes glutaredoxin-like thiol disulfide exchange reactions with reduced glutathione as electron donor. Reduced in a glutathione-dependent way and secreted into the extracellular matrix where it activates TGM2 and promotes blood vessel growth during tissue remodeling as occurs in tumorigenesis. Can reduce specific cysteines in TGM2 and regulate cofactor binding. Can insert into membranes and form outwardly rectifying chloride ion channels. May participate in cellular growth control. The protein is Chloride intracellular channel protein 3 of Homo sapiens (Human).